A 128-amino-acid chain; its full sequence is MFPGKVNPRMLKKMQKMMKDFGMETEDLDVRKVIFVFDDEEWVFEEPKVQVMDILGVKTYSITGKPKKIKKEKVEEEEEVKVEITEEDVELVAKQCNVSKEEARKALEECNGDIAEAILKLEEEKEEN.

Positions 8–75 (PRMLKKMQKM…PKKIKKEKVE (68 aa)) constitute an NAC-A/B domain.

This sequence belongs to the NAC-alpha family. As to quaternary structure, homodimer. Interacts with the ribosome. Binds ribosomal RNA.

Functionally, contacts the emerging nascent chain on the ribosome. The protein is Nascent polypeptide-associated complex protein of Methanocaldococcus jannaschii (strain ATCC 43067 / DSM 2661 / JAL-1 / JCM 10045 / NBRC 100440) (Methanococcus jannaschii).